A 548-amino-acid polypeptide reads, in one-letter code: Biotin-dependent acetyl-/propionyl-coenzyme A carboxylase beta5 subunit (548 aa).

Positions 1–23 (MTSVTDRSAHSAERSTEHTIDIH) are disordered. A compositionally biased stretch (basic and acidic residues) spans 7 to 21 (RSAHSAERSTEHTID). A CoA carboxyltransferase N-terminal domain is found at 25-281 (TAGKLAELHK…NNSTDAPRYQ (257 aa)). Positions 295–541 (DEDLELDTLI…ERKIAQLPPK (247 aa)) constitute a CoA carboxyltransferase C-terminal domain.

It belongs to the AccD/PCCB family. The biotin-dependent acyl-CoA carboxylase complex is composed of AccA3, which contains the biotin carboxylase (BC) and biotin carboxyl carrier protein (BCCP) domains, and AccD5, which contains the carboxyl transferase (CT) domain.

It catalyses the reaction N(6)-carboxybiotinyl-L-lysyl-[protein] + acetyl-CoA = N(6)-biotinyl-L-lysyl-[protein] + malonyl-CoA. The catalysed reaction is N(6)-carboxybiotinyl-L-lysyl-[protein] + propanoyl-CoA = methylmalonyl-CoA + N(6)-biotinyl-L-lysyl-[protein]. It participates in lipid metabolism; mycolic acid biosynthesis. Its function is as follows. Component of a biotin-dependent acyl-CoA carboxylase complex. This subunit transfers the CO2 from carboxybiotin to the CoA ester substrate. When associated with the alpha3 subunit AccA3, is involved in the carboxylation of acetyl-CoA and propionyl-CoA. The sequence is that of Biotin-dependent acetyl-/propionyl-coenzyme A carboxylase beta5 subunit (accD5) from Mycobacterium tuberculosis (strain CDC 1551 / Oshkosh).